Here is a 78-residue protein sequence, read N- to C-terminus: COP9 signalosome complex subunit 5b (78 aa).

This sequence belongs to the peptidase M67A family. CSN5 subfamily. In terms of assembly, component of the CSN complex, probably composed of CSN1, CSN2, CSN3, CSN4, CSN5 (CSN5A or CSN5B), CSN6 (CSN6A or CSN6B), CSN7 and CSN8. It depends on a divalent metal cation as a cofactor.

The protein resides in the cytoplasm. Its subcellular location is the nucleus. Probable protease subunit of the COP9 signalosome complex (CSN), a complex involved in various cellular and developmental processes such as photomorphogenesis and auxin and jasmonate responses. The CSN complex is an essential regulator of the ubiquitin (Ubl) conjugation pathway by mediating the deneddylation of the cullin subunits of the SCF-type E3 ligase complexes, leading to decrease the Ubl ligase activity of SCF. In the complex, it probably acts as the catalytic center that mediates the cleavage of Nedd8 from cullins. It however has no metalloprotease activity by itself and requires the other subunits of the CSN complex. The CSN complex is involved in repression of photomorphogenesis in darkness by regulating the activity of COP1-containing Ubl ligase complexes. This Brassica oleracea (Wild cabbage) protein is COP9 signalosome complex subunit 5b (CSN5B).